The sequence spans 475 residues: Probable 5'-adenylylsulfate reductase 1, chloroplastic (475 aa).

The transit peptide at 1–63 (MASATASISS…AAEPARQPVS (63 aa)) directs the protein to the chloroplast. A reductase domain region spans residues 72–327 (AAPVAEDAAA…KAKECGLHKG (256 aa)). Residues 341–475 (HKAGGANGNG…SLLAFVNSLR (135 aa)) enclose the Thioredoxin domain. Catalysis depends on nucleophile residues cysteine 393 and cysteine 396. A disulfide bond links cysteine 393 and cysteine 396.

This sequence belongs to the APS reductase family. The cofactor is [4Fe-4S] cluster.

The protein localises to the plastid. The protein resides in the chloroplast. It carries out the reaction glutathione disulfide + sulfite + AMP + 2 H(+) = adenosine 5'-phosphosulfate + 2 glutathione. In terms of biological role, reduces sulfate for Cys biosynthesis. This chain is Probable 5'-adenylylsulfate reductase 1, chloroplastic (APR1), found in Oryza sativa subsp. japonica (Rice).